Reading from the N-terminus, the 408-residue chain is MGFITKAIPIVLAALSTVDGAKILEAGPHAETIPNKYIVVMKQDVSHEAFNAHATWVGNNFSRRPMRRGGSFKPMAGMQHKFSLGGTFKAYTGEFDEAMIKDISNHDDVDFIERDTVVKATAITQQDNVPSWGLARVGSKEAGGSTYYYDDTAGKGVTAYIIDTGIDIHHGDFGGRAKWGKNFVDKMDEDCNGHGSHVAGTVGGTKFGVAKGVNLVAVKVLDCEGSGSNSGVIMGMEWAMKEASGGGNSTAKAAGKSVMNMSLGGPRSEASNKAAKAIADAGIFMAVAAGNDNMDAQHSSPASEPSICTVAASSEDDSKADFSNYGAVVDIYAPGNEITSVKPGNGTDTLSGTSMASPHVCGLGAYLIGLGKEGGPGLCDTIKEMATDAIKNPGEGTTGKLIYNGSGK.

The first 20 residues, 1–20 (MGFITKAIPIVLAALSTVDG), serve as a signal peptide directing secretion. The propeptide occupies 21 to 123 (AKILEAGPHA…RDTVVKATAI (103 aa)). The Inhibitor I9 domain occupies 36-119 (KYIVVMKQDV…DFIERDTVVK (84 aa)). The Peptidase S8 domain maps to 131–408 (SWGLARVGSK…GKLIYNGSGK (278 aa)). Catalysis depends on charge relay system residues Asp163 and His194. Residues Asn248, Asn260, and Asn345 are each glycosylated (N-linked (GlcNAc...) asparagine). Ser354 acts as the Charge relay system in catalysis. The N-linked (GlcNAc...) asparagine glycan is linked to Asn404.

This sequence belongs to the peptidase S8 family.

Its subcellular location is the secreted. In terms of biological role, secreted subtilisin-like serine protease with keratinolytic activity that contributes to pathogenicity. The protein is Subtilisin-like protease 6 (SUB6) of Arthroderma gypseum (strain ATCC MYA-4604 / CBS 118893) (Microsporum gypseum).